The sequence spans 735 residues: 1,4-alpha-glucan branching enzyme GlgB (735 aa).

Asp414 (nucleophile) is an active-site residue. The Proton donor role is filled by Glu469.

Belongs to the glycosyl hydrolase 13 family. GlgB subfamily. As to quaternary structure, monomer.

It catalyses the reaction Transfers a segment of a (1-&gt;4)-alpha-D-glucan chain to a primary hydroxy group in a similar glucan chain.. Its pathway is glycan biosynthesis; glycogen biosynthesis. Catalyzes the formation of the alpha-1,6-glucosidic linkages in glycogen by scission of a 1,4-alpha-linked oligosaccharide from growing alpha-1,4-glucan chains and the subsequent attachment of the oligosaccharide to the alpha-1,6 position. The protein is 1,4-alpha-glucan branching enzyme GlgB of Burkholderia lata (strain ATCC 17760 / DSM 23089 / LMG 22485 / NCIMB 9086 / R18194 / 383).